The following is a 101-amino-acid chain: UPF0473 protein EF_1204 (101 aa).

It belongs to the UPF0473 family.

The protein is UPF0473 protein EF_1204 of Enterococcus faecalis (strain ATCC 700802 / V583).